The chain runs to 338 residues: GDSL esterase/lipase At5g63170 (338 aa).

The N-terminal stretch at 1–23 (MNSLVIQTTIVLVSVISVSIVHA) is a signal peptide. S35 serves as the catalytic Nucleophile. Catalysis depends on residues D313 and H316.

This sequence belongs to the 'GDSL' lipolytic enzyme family.

The protein resides in the secreted. The protein is GDSL esterase/lipase At5g63170 of Arabidopsis thaliana (Mouse-ear cress).